The primary structure comprises 323 residues: Pyruvate dehydrogenase E1 component subunit beta (323 aa).

Thiamine diphosphate is bound at residue Glu-60. Residues Ile-113, Ala-161, Ile-162, Asp-164, and Asn-166 each coordinate K(+).

In terms of assembly, heterodimer of an alpha and a beta chain. Thiamine diphosphate is required as a cofactor.

Its subcellular location is the plastid. It is found in the chloroplast. It catalyses the reaction N(6)-[(R)-lipoyl]-L-lysyl-[protein] + pyruvate + H(+) = N(6)-[(R)-S(8)-acetyldihydrolipoyl]-L-lysyl-[protein] + CO2. Its function is as follows. The pyruvate dehydrogenase complex catalyzes the overall conversion of pyruvate to acetyl-CoA and CO(2). It contains multiple copies of three enzymatic components: pyruvate dehydrogenase (E1), dihydrolipoamide acetyltransferase (E2) and lipoamide dehydrogenase (E3). This Gracilaria tenuistipitata var. liui (Red alga) protein is Pyruvate dehydrogenase E1 component subunit beta (pdhB).